We begin with the raw amino-acid sequence, 126 residues long: Aspartate 1-decarboxylase (126 aa).

Residue S25 is the Schiff-base intermediate with substrate; via pyruvic acid of the active site. Position 25 is a pyruvic acid (Ser) (S25). T57 serves as a coordination point for substrate. The active-site Proton donor is Y58. Position 73–75 (73–75 (GAA)) interacts with substrate.

The protein belongs to the PanD family. In terms of assembly, heterooctamer of four alpha and four beta subunits. Pyruvate is required as a cofactor. In terms of processing, is synthesized initially as an inactive proenzyme, which is activated by self-cleavage at a specific serine bond to produce a beta-subunit with a hydroxyl group at its C-terminus and an alpha-subunit with a pyruvoyl group at its N-terminus.

Its subcellular location is the cytoplasm. It carries out the reaction L-aspartate + H(+) = beta-alanine + CO2. It participates in cofactor biosynthesis; (R)-pantothenate biosynthesis; beta-alanine from L-aspartate: step 1/1. In terms of biological role, catalyzes the pyruvoyl-dependent decarboxylation of aspartate to produce beta-alanine. This chain is Aspartate 1-decarboxylase, found in Pectobacterium carotovorum subsp. carotovorum (strain PC1).